We begin with the raw amino-acid sequence, 119 residues long: Large ribosomal subunit protein uL18 (119 aa).

This sequence belongs to the universal ribosomal protein uL18 family. As to quaternary structure, part of the 50S ribosomal subunit; part of the 5S rRNA/L5/L18/L25 subcomplex. Contacts the 5S and 23S rRNAs.

This is one of the proteins that bind and probably mediate the attachment of the 5S RNA into the large ribosomal subunit, where it forms part of the central protuberance. The chain is Large ribosomal subunit protein uL18 from Mycoplasmoides gallisepticum (strain R(low / passage 15 / clone 2)) (Mycoplasma gallisepticum).